The chain runs to 272 residues: Acyl-[acyl-carrier-protein]--UDP-N-acetylglucosamine O-acyltransferase (272 aa).

This sequence belongs to the transferase hexapeptide repeat family. LpxA subfamily. As to quaternary structure, homotrimer.

It is found in the cytoplasm. It catalyses the reaction a (3R)-hydroxyacyl-[ACP] + UDP-N-acetyl-alpha-D-glucosamine = a UDP-3-O-[(3R)-3-hydroxyacyl]-N-acetyl-alpha-D-glucosamine + holo-[ACP]. It participates in glycolipid biosynthesis; lipid IV(A) biosynthesis; lipid IV(A) from (3R)-3-hydroxytetradecanoyl-[acyl-carrier-protein] and UDP-N-acetyl-alpha-D-glucosamine: step 1/6. Involved in the biosynthesis of lipid A, a phosphorylated glycolipid that anchors the lipopolysaccharide to the outer membrane of the cell. This chain is Acyl-[acyl-carrier-protein]--UDP-N-acetylglucosamine O-acyltransferase, found in Rhizobium johnstonii (strain DSM 114642 / LMG 32736 / 3841) (Rhizobium leguminosarum bv. viciae).